We begin with the raw amino-acid sequence, 499 residues long: Isoflavone 2'-hydroxylase (499 aa).

A heme-binding site is contributed by Cys436.

The protein belongs to the cytochrome P450 family. Heme is required as a cofactor.

It localises to the membrane. The catalysed reaction is a 2'-unsubstituted isoflavone + reduced [NADPH--hemoprotein reductase] + O2 = a 2'-hydroxyisoflavone + oxidized [NADPH--hemoprotein reductase] + H2O + H(+). In terms of biological role, catalyzes the hydroxylation of isoflavones, daidzein and formononetin, to yield 2'-hydroxyisoflavones, 2'-hydroxydaidzein, and 2'-hydroxyformononetin, respectively. The sequence is that of Isoflavone 2'-hydroxylase (CYP81E1) from Glycyrrhiza echinata (Licorice).